A 233-amino-acid chain; its full sequence is Large ribosomal subunit protein uL1 (233 aa).

Belongs to the universal ribosomal protein uL1 family. Part of the 50S ribosomal subunit.

In terms of biological role, binds directly to 23S rRNA. The L1 stalk is quite mobile in the ribosome, and is involved in E site tRNA release. Its function is as follows. Protein L1 is also a translational repressor protein, it controls the translation of the L11 operon by binding to its mRNA. The sequence is that of Large ribosomal subunit protein uL1 from Proteus vulgaris.